Reading from the N-terminus, the 453-residue chain is Ribulose bisphosphate carboxylase large chain (453 aa).

Residues 1 to 2 constitute a propeptide that is removed on maturation; that stretch reads MS. N-acetylproline is present on P3. An N6,N6,N6-trimethyllysine modification is found at K14. Substrate contacts are provided by N123 and T173. K175 functions as the Proton acceptor in the catalytic mechanism. Residue K177 coordinates substrate. Positions 201, 203, and 204 each coordinate Mg(2+). N6-carboxylysine is present on K201. H294 functions as the Proton acceptor in the catalytic mechanism. Substrate is bound by residues R295, H327, and S379.

Belongs to the RuBisCO large chain family. Type I subfamily. Heterohexadecamer of 8 large chains and 8 small chains; disulfide-linked. The disulfide link is formed within the large subunit homodimers. It depends on Mg(2+) as a cofactor. The disulfide bond which can form in the large chain dimeric partners within the hexadecamer appears to be associated with oxidative stress and protein turnover.

It localises to the plastid. Its subcellular location is the chloroplast. It carries out the reaction 2 (2R)-3-phosphoglycerate + 2 H(+) = D-ribulose 1,5-bisphosphate + CO2 + H2O. The catalysed reaction is D-ribulose 1,5-bisphosphate + O2 = 2-phosphoglycolate + (2R)-3-phosphoglycerate + 2 H(+). In terms of biological role, ruBisCO catalyzes two reactions: the carboxylation of D-ribulose 1,5-bisphosphate, the primary event in carbon dioxide fixation, as well as the oxidative fragmentation of the pentose substrate in the photorespiration process. Both reactions occur simultaneously and in competition at the same active site. This Cruciata glabra (Slender crosswort) protein is Ribulose bisphosphate carboxylase large chain.